Reading from the N-terminus, the 174-residue chain is Cathepsin B-like cysteine proteinase 3 (174 aa).

Cystine bridges form between Cys-22/Cys-55 and Cys-30/Cys-42. Catalysis depends on residues His-122 and Asn-142.

Belongs to the peptidase C1 family.

Expression of the protease correlates with blood-feeding and suggests a role for the protease in blood digestion. The polypeptide is Cathepsin B-like cysteine proteinase 3 (CP-3) (Ostertagia ostertagi (Brown stomach worm)).